Here is a 614-residue protein sequence, read N- to C-terminus: 1-deoxy-D-xylulose-5-phosphate synthase (614 aa).

Residues histidine 74 and 115–117 (GHS) contribute to the thiamine diphosphate site. Residue aspartate 146 coordinates Mg(2+). Residues 147–148 (GA), asparagine 175, tyrosine 282, and glutamate 363 each bind thiamine diphosphate. Asparagine 175 is a Mg(2+) binding site.

This sequence belongs to the transketolase family. DXPS subfamily. In terms of assembly, homodimer. It depends on Mg(2+) as a cofactor. Requires thiamine diphosphate as cofactor.

The enzyme catalyses D-glyceraldehyde 3-phosphate + pyruvate + H(+) = 1-deoxy-D-xylulose 5-phosphate + CO2. It participates in metabolic intermediate biosynthesis; 1-deoxy-D-xylulose 5-phosphate biosynthesis; 1-deoxy-D-xylulose 5-phosphate from D-glyceraldehyde 3-phosphate and pyruvate: step 1/1. Functionally, catalyzes the acyloin condensation reaction between C atoms 2 and 3 of pyruvate and glyceraldehyde 3-phosphate to yield 1-deoxy-D-xylulose-5-phosphate (DXP). The polypeptide is 1-deoxy-D-xylulose-5-phosphate synthase (Methylobacillus flagellatus (strain ATCC 51484 / DSM 6875 / VKM B-1610 / KT)).